We begin with the raw amino-acid sequence, 94 residues long: Conotoxin Gla-MrII (94 aa).

Residues 1 to 25 (MFGHTSVSFLLLSIVALGMVATVIC) form the signal peptide. 4-carboxyglutamate is present on residues glutamate 30, glutamate 34, glutamate 37, glutamate 40, and glutamate 41. Residues 78–94 (STHMQKRFLRMPRDLAD) constitute a propeptide that is removed on maturation.

It belongs to the conotoxin I2 superfamily. In terms of processing, contains 4 disulfide bonds. As to expression, expressed by the venom duct.

The protein resides in the secreted. The sequence is that of Conotoxin Gla-MrII from Conus marmoreus (Marble cone).